We begin with the raw amino-acid sequence, 250 residues long: NAD(P)H-quinone oxidoreductase subunit S, chloroplastic (250 aa).

The transit peptide at 1–48 (MATSSITIPTIRTPIHRSKFLGQTHQFSTVNRSVFPPPKQQSKLYQVK) directs the protein to the chloroplast. Residue Lys52 forms a Glycyl lysine isopeptide (Lys-Gly) (interchain with G-Cter in ubiquitin) linkage. Basic and acidic residues-rich tracts occupy residues 76 to 94 (QRNI…NETE) and 106 to 115 (VPEDGFEKEM). Disordered stretches follow at residues 76 to 163 (QRNI…KPKA) and 222 to 250 (REKG…EAAP). Pro residues predominate over residues 136-146 (NPPPPPPPPPA).

In terms of assembly, part of the chloroplast NDH complex, composed of a mixture of chloroplast and nucleus encoded subunits. Component of the electron donor-binding subcomplex, at least composed of NDHS, NDHT and NDHU. Interacts with the NDH subcomplex A via the protein NDHT and NDHU. Post-translationally, arg-193 is the critical site for the high affinity binding of NDH to ferredoxin.

It localises to the plastid. The protein resides in the chloroplast thylakoid membrane. The enzyme catalyses a plastoquinone + NADH + (n+1) H(+)(in) = a plastoquinol + NAD(+) + n H(+)(out). It carries out the reaction a plastoquinone + NADPH + (n+1) H(+)(in) = a plastoquinol + NADP(+) + n H(+)(out). NDH shuttles electrons from NAD(P)H:plastoquinone, via FMN and iron-sulfur (Fe-S) centers, to quinones in the photosynthetic chain and possibly in a chloroplast respiratory chain. The immediate electron acceptor for the enzyme in this species is believed to be plastoquinone. Couples the redox reaction to proton translocation, and thus conserves the redox energy in a proton gradient. Required for the efficient operation of ferredoxin-dependent plastoquinone reduction. Forms the electron donor-binding subcomplex in association with the NDHT and NDHU subunits. The protein is NAD(P)H-quinone oxidoreductase subunit S, chloroplastic of Arabidopsis thaliana (Mouse-ear cress).